The chain runs to 929 residues: Bifunctional uridylyltransferase/uridylyl-removing enzyme (929 aa).

Residues 1–383 (MDSVTTEHKQ…RPTPAKRRVP (383 aa)) are uridylyltransferase. The segment at 384–739 (DSDDFIVDNN…VGFDEVRGVT (356 aa)) is uridylyl-removing. The HD domain maps to 499–622 (VDEHLIRCVG…VQSVEQMKLL (124 aa)). ACT domains are found at residues 740–822 (ELTI…VVAR) and 850–927 (VIEV…AVQP).

It belongs to the GlnD family. The cofactor is Mg(2+).

The enzyme catalyses [protein-PII]-L-tyrosine + UTP = [protein-PII]-uridylyl-L-tyrosine + diphosphate. The catalysed reaction is [protein-PII]-uridylyl-L-tyrosine + H2O = [protein-PII]-L-tyrosine + UMP + H(+). With respect to regulation, uridylyltransferase (UTase) activity is inhibited by glutamine, while glutamine activates uridylyl-removing (UR) activity. Its function is as follows. Modifies, by uridylylation and deuridylylation, the PII regulatory proteins (GlnB and homologs), in response to the nitrogen status of the cell that GlnD senses through the glutamine level. Under low glutamine levels, catalyzes the conversion of the PII proteins and UTP to PII-UMP and PPi, while under higher glutamine levels, GlnD hydrolyzes PII-UMP to PII and UMP (deuridylylation). Thus, controls uridylylation state and activity of the PII proteins, and plays an important role in the regulation of nitrogen fixation and metabolism. This is Bifunctional uridylyltransferase/uridylyl-removing enzyme from Bradyrhizobium diazoefficiens (strain JCM 10833 / BCRC 13528 / IAM 13628 / NBRC 14792 / USDA 110).